Here is a 994-residue protein sequence, read N- to C-terminus: Cation-chloride cotransporter 2 (994 aa).

The segment at 1 to 28 is disordered; that stretch reads MERGGFGGAGRHDEEAPAMRPAPQQRYR. Over 1–139 the chain is Cytoplasmic; it reads MERGGFGGAG…GHPKETETKL (139 aa). A helical membrane pass occupies residues 140-160; it reads DTMMGVFVPCLQNILGIIYYI. The Extracellular portion of the chain corresponds to 161 to 174; it reads RFTWIVGMGGVWQS. A helical transmembrane segment spans residues 175-195; that stretch reads LVLVAFCGSCTFLTTISLSAI. At 196–221 the chain is on the cytoplasmic side; it reads ATNGAMKGGGPYYLIGRALGPEVGVS. The chain crosses the membrane as a helical span at residues 222-242; it reads IGLCFFLGNAVAGAMYVLGAV. Over 243-287 the chain is Extracellular; that stretch reads ETFLDAVPSAEFFQESVTVVTNTFVNGTAAGNATTISTPNLHDLQ. Residues asparagine 268 and asparagine 274 are each glycosylated (N-linked (GlcNAc...) asparagine). Residues 288-308 traverse the membrane as a helical segment; sequence VYGIIVTILLCFIVFGGVKII. Residues 309-311 are Cytoplasmic-facing; that stretch reads NKV. The chain crosses the membrane as a helical span at residues 312-332; the sequence is APAFLIPVLFSILCIYIGVFI. The Extracellular segment spans residues 333–372; sequence APRPNASKWITGLSITTLKDNWSSDYQRTNNAGVPDPNGS. N-linked (GlcNAc...) asparagine glycans are attached at residues asparagine 337, asparagine 353, and asparagine 370. A helical transmembrane segment spans residues 373–393; that stretch reads IYWDFNALLGLYFPAVTGIMA. Topologically, residues 394 to 412 are cytoplasmic; that stretch reads GSNRSASLKDTQRSIPIGT. The chain crosses the membrane as a helical span at residues 413–433; it reads LHATISTTMMYLLSVFLFGAL. At 434-448 the chain is on the extracellular side; the sequence is STREGLLTDRLLCAA. The chain crosses the membrane as a helical span at residues 449 to 469; it reads VAWPSPAVVYAGIILSTLGAA. Residues 470–505 are Cytoplasmic-facing; the sequence is LQSLTGAPRLLAAIANDDILPVLNYFKAYEGSEPHV. A helical transmembrane segment spans residues 506–526; it reads ATLFTSFICISCVIIGNLDVI. At 527 to 529 the chain is on the extracellular side; it reads TPT. A helical membrane pass occupies residues 530–552; that stretch reads ITMFFLLCYAGVNLSCFLLDLLD. Residues 553-558 are Cytoplasmic-facing; it reads APSWRP. The helical transmembrane segment at 559-579 threads the bilayer; it reads RWKLHHWSLSLIGALLCIVIM. Residues 580–585 lie on the Extracellular side of the membrane; sequence FMISWT. A helical transmembrane segment spans residues 586–606; sequence FTVVSLALASLIYYYVSLKGK. At 607–994 the chain is on the cytoplasmic side; it reads AGDWGDGFKS…YRRDVVTLFT (388 aa).

Belongs to the SLC12A transporter family.

It localises to the membrane. Probable cation/chloride cotransporter. The polypeptide is Cation-chloride cotransporter 2 (CCC2) (Oryza sativa subsp. japonica (Rice)).